A 384-amino-acid polypeptide reads, in one-letter code: tRNA-specific 2-thiouridylase MnmA (384 aa).

A disordered region spans residues 1 to 26 (MDEGIRASGGIRACQTGKQKQGRKRP). ATP-binding positions include 36–43 (GMSGGVDS) and M62. Residues 122–124 (NPD) are interaction with target base in tRNA. The active-site Nucleophile is the C127. An intrachain disulfide couples C127 to C223. G151 lines the ATP pocket. The interval 173–175 (KDQ) is interaction with tRNA. C223 serves as the catalytic Cysteine persulfide intermediate. Positions 334 to 335 (RY) are interaction with tRNA.

This sequence belongs to the MnmA/TRMU family.

Its subcellular location is the cytoplasm. It carries out the reaction S-sulfanyl-L-cysteinyl-[protein] + uridine(34) in tRNA + AH2 + ATP = 2-thiouridine(34) in tRNA + L-cysteinyl-[protein] + A + AMP + diphosphate + H(+). Catalyzes the 2-thiolation of uridine at the wobble position (U34) of tRNA, leading to the formation of s(2)U34. The polypeptide is tRNA-specific 2-thiouridylase MnmA (Chromobacterium violaceum (strain ATCC 12472 / DSM 30191 / JCM 1249 / CCUG 213 / NBRC 12614 / NCIMB 9131 / NCTC 9757 / MK)).